We begin with the raw amino-acid sequence, 238 residues long: Ribonuclease PH (238 aa).

Phosphate contacts are provided by residues arginine 86 and 124 to 126; that span reads GTR.

It belongs to the RNase PH family. Homohexameric ring arranged as a trimer of dimers.

It carries out the reaction tRNA(n+1) + phosphate = tRNA(n) + a ribonucleoside 5'-diphosphate. Functionally, phosphorolytic 3'-5' exoribonuclease that plays an important role in tRNA 3'-end maturation. Removes nucleotide residues following the 3'-CCA terminus of tRNAs; can also add nucleotides to the ends of RNA molecules by using nucleoside diphosphates as substrates, but this may not be physiologically important. Probably plays a role in initiation of 16S rRNA degradation (leading to ribosome degradation) during starvation. The polypeptide is Ribonuclease PH (Actinobacillus pleuropneumoniae serotype 5b (strain L20)).